We begin with the raw amino-acid sequence, 74 residues long: UPF0346 protein LCA_0996 (74 aa).

Belongs to the UPF0346 family.

This is UPF0346 protein LCA_0996 from Latilactobacillus sakei subsp. sakei (strain 23K) (Lactobacillus sakei subsp. sakei).